Reading from the N-terminus, the 179-residue chain is Large ribosomal subunit protein uL6 (179 aa).

Belongs to the universal ribosomal protein uL6 family. Part of the 50S ribosomal subunit.

Functionally, this protein binds to the 23S rRNA, and is important in its secondary structure. It is located near the subunit interface in the base of the L7/L12 stalk, and near the tRNA binding site of the peptidyltransferase center. The sequence is that of Large ribosomal subunit protein uL6 from Halothermothrix orenii (strain H 168 / OCM 544 / DSM 9562).